Reading from the N-terminus, the 175-residue chain is Ribosome maturation factor RimM (175 aa).

One can recognise a PRC barrel domain in the interval 98 to 172 (DGEFHVRDLQ…WLLITPPKGL (75 aa)).

It belongs to the RimM family. Binds ribosomal protein uS19.

Its subcellular location is the cytoplasm. Its function is as follows. An accessory protein needed during the final step in the assembly of 30S ribosomal subunit, possibly for assembly of the head region. Essential for efficient processing of 16S rRNA. May be needed both before and after RbfA during the maturation of 16S rRNA. It has affinity for free ribosomal 30S subunits but not for 70S ribosomes. This Synechococcus sp. (strain RCC307) protein is Ribosome maturation factor RimM.